The chain runs to 135 residues: CDGSH iron-sulfur domain-containing protein 2B (135 aa).

The Lumenal portion of the chain corresponds to 1–37 (MVLETISKIIKTQLPAYLKKFPLPETIGGFARLTVLD). The chain crosses the membrane as a helical span at residues 38–60 (WLRLLPLLGILTLLGYLTIRPFL). Topologically, residues 61–135 (PKKKKQKDSL…GPLILKKKII (75 aa)) are cytoplasmic. [2Fe-2S] cluster-binding residues include Cys99, Cys101, Cys110, and His114.

Belongs to the CISD protein family. CISD2 subfamily. As to quaternary structure, homodimer. Requires [2Fe-2S] cluster as cofactor.

The protein resides in the endoplasmic reticulum membrane. It localises to the mitochondrion outer membrane. Functionally, regulator of autophagy that contributes to antagonize becn1-mediated cellular autophagy at the endoplasmic reticulum. Participates in the interaction of bcl2 with becn1 and is required for bcl2-mediated depression of endoplasmic reticulum Ca(2+) stores during autophagy. This chain is CDGSH iron-sulfur domain-containing protein 2B (cisd2b), found in Oncorhynchus mykiss (Rainbow trout).